A 131-amino-acid polypeptide reads, in one-letter code: MKIALIAHDKKKNDMVSFAYAYKPIFEQHELFATGTTGLRIMEATGLVVTRYQSGPLGGDQEIGAMIAKNDLDMVIFFRDPLTAQPHEPDVNALLRLCDVYAIPLATNMASAEMLMHALERGDLDYRKLRK.

The region spanning 1–131 (MKIALIAHDK…GDLDYRKLRK (131 aa)) is the MGS-like domain. Residues histidine 8, lysine 12, 34 to 37 (TGTT), and 54 to 55 (SG) each bind substrate. Catalysis depends on aspartate 60, which acts as the Proton donor/acceptor. Residue histidine 87 coordinates substrate.

The protein belongs to the methylglyoxal synthase family.

It carries out the reaction dihydroxyacetone phosphate = methylglyoxal + phosphate. Catalyzes the formation of methylglyoxal from dihydroxyacetone phosphate. This Bacillus cereus (strain ATCC 10987 / NRS 248) protein is Methylglyoxal synthase.